Reading from the N-terminus, the 561-residue chain is Type 2 DNA topoisomerase 6 subunit B (561 aa).

ATP contacts are provided by residues Asn46, Asp78, 99 to 100 (TK), 109 to 116 (GQQGIGIS), and Lys471.

This sequence belongs to the TOP6B family. In terms of assembly, homodimer. Heterotetramer of two Top6A and two Top6B chains.

The catalysed reaction is ATP-dependent breakage, passage and rejoining of double-stranded DNA.. Relaxes both positive and negative superturns and exhibits a strong decatenase activity. This Thermococcus gammatolerans (strain DSM 15229 / JCM 11827 / EJ3) protein is Type 2 DNA topoisomerase 6 subunit B.